A 494-amino-acid polypeptide reads, in one-letter code: 3-octaprenyl-4-hydroxybenzoate carboxy-lyase (494 aa).

Asn-172 is a binding site for Mn(2+). Residues 175-177 (IYR), 189-191 (RWL), and 194-195 (RG) each bind prenylated FMN. Residue Glu-238 coordinates Mn(2+). Asp-287 acts as the Proton donor in catalysis.

It belongs to the UbiD family. Homohexamer. Prenylated FMN is required as a cofactor. Mn(2+) serves as cofactor.

The protein localises to the cell membrane. The enzyme catalyses a 4-hydroxy-3-(all-trans-polyprenyl)benzoate + H(+) = a 2-(all-trans-polyprenyl)phenol + CO2. The protein operates within cofactor biosynthesis; ubiquinone biosynthesis. Catalyzes the decarboxylation of 3-octaprenyl-4-hydroxy benzoate to 2-octaprenylphenol, an intermediate step in ubiquinone biosynthesis. This chain is 3-octaprenyl-4-hydroxybenzoate carboxy-lyase, found in Cronobacter sakazakii (strain ATCC BAA-894) (Enterobacter sakazakii).